Reading from the N-terminus, the 158-residue chain is Putative 4-hydroxy-4-methyl-2-oxoglutarate aldolase (158 aa).

Substrate contacts are provided by residues 75-78 (GDLI) and Arg-97. Asp-98 is a binding site for a divalent metal cation.

This sequence belongs to the class II aldolase/RraA-like family. In terms of assembly, homotrimer. It depends on a divalent metal cation as a cofactor.

The catalysed reaction is 4-hydroxy-4-methyl-2-oxoglutarate = 2 pyruvate. It carries out the reaction oxaloacetate + H(+) = pyruvate + CO2. Its function is as follows. Catalyzes the aldol cleavage of 4-hydroxy-4-methyl-2-oxoglutarate (HMG) into 2 molecules of pyruvate. Also contains a secondary oxaloacetate (OAA) decarboxylase activity due to the common pyruvate enolate transition state formed following C-C bond cleavage in the retro-aldol and decarboxylation reactions. The sequence is that of Putative 4-hydroxy-4-methyl-2-oxoglutarate aldolase from Saccharopolyspora erythraea (strain ATCC 11635 / DSM 40517 / JCM 4748 / NBRC 13426 / NCIMB 8594 / NRRL 2338).